An 89-amino-acid chain; its full sequence is Small ribosomal subunit protein bS16c (89 aa).

It belongs to the bacterial ribosomal protein bS16 family.

It localises to the plastid. Its subcellular location is the chloroplast. The polypeptide is Small ribosomal subunit protein bS16c (Drimys granadensis).